Here is a 526-residue protein sequence, read N- to C-terminus: ATP-dependent RNA helicase DBP3 (526 aa).

A compositionally biased stretch (basic and acidic residues) spans 1 to 33; that stretch reads MVEEHKNKKRRQEDGPADVPEKKVKVSKSEKKD. Residues 1 to 86 form a disordered region; it reads MVEEHKNKKR…SSQGYTQSES (86 aa). Residues 34-65 show a composition bias toward basic residues; sequence KKEKKEKKEKKEKKEKKEKKEKKEKKEKKKKY. Over residues 69–86 the composition is skewed to polar residues; the sequence is ATISGSAQSSQGYTQSES. The short motif at 118–144 is the Q motif element; sequence LSFDQIQLNSKISAVVNKFPTPTPIQS. Residues 147–318 form the Helicase ATP-binding domain; sequence WPYLLSGKDV…STFMNQPVKV (172 aa). An ATP-binding site is contributed by 160 to 167; sequence AETGSGKT. Residues 265 to 268 carry the DEAD box motif; sequence DEAD. The region spanning 334–496 is the Helicase C-terminal domain; that stretch reads QIVEVIEPFD…PVPDELLKFG (163 aa).

The protein belongs to the DEAD box helicase family. DDX5/DBP2 subfamily.

The protein resides in the nucleus. It localises to the nucleolus. It catalyses the reaction ATP + H2O = ADP + phosphate + H(+). ATP-dependent RNA helicase required for 60S ribosomal subunit synthesis. Involved in efficient pre-rRNA processing, predominantly at site A3, which is necessary for the normal formation of 25S and 5.8S rRNAs. The chain is ATP-dependent RNA helicase DBP3 (DBP3) from Scheffersomyces stipitis (strain ATCC 58785 / CBS 6054 / NBRC 10063 / NRRL Y-11545) (Yeast).